A 428-amino-acid chain; its full sequence is Enolase (428 aa).

Gln162 contributes to the (2R)-2-phosphoglycerate binding site. The Proton donor role is filled by Glu204. Residues Asp241, Glu283, and Asp310 each contribute to the Mg(2+) site. (2R)-2-phosphoglycerate is bound by residues Lys335, Arg364, Ser365, and Lys386. Lys335 functions as the Proton acceptor in the catalytic mechanism.

It belongs to the enolase family. It depends on Mg(2+) as a cofactor.

Its subcellular location is the cytoplasm. It is found in the secreted. The protein resides in the cell surface. The enzyme catalyses (2R)-2-phosphoglycerate = phosphoenolpyruvate + H2O. It participates in carbohydrate degradation; glycolysis; pyruvate from D-glyceraldehyde 3-phosphate: step 4/5. In terms of biological role, catalyzes the reversible conversion of 2-phosphoglycerate (2-PG) into phosphoenolpyruvate (PEP). It is essential for the degradation of carbohydrates via glycolysis. This Rhodococcus erythropolis (strain PR4 / NBRC 100887) protein is Enolase.